The sequence spans 346 residues: Autophagy-related protein 3 (346 aa).

The tract at residues 85-161 (DFAGDAGHEE…DDDDEAIIRA (77 aa)) is flexible region. Cysteine 238 acts as the Glycyl thioester intermediate in catalysis. A handle region region spans residues 242–322 (SVMKTLLDRA…DQEVAIRVDQ (81 aa)).

Belongs to the ATG3 family. As to quaternary structure, monomer. Interacts with apg-6/atg8 through an intermediate thioester bond through the C-terminal Gly of apg-6/atg8. Also interacts with the 40 amino acid C-terminal region of the E1-like apg-5/atg7 enzyme. Also interacts with the atg12-apg-4/atg5 conjugate.

The protein resides in the cytoplasm. Functionally, E2 conjugating enzyme required for the cytoplasm to vacuole transport (Cvt) and autophagy. Required for selective autophagic degradation of the nucleus (nucleophagy) as well as for mitophagy which contributes to regulate mitochondrial quantity and quality by eliminating the mitochondria to a basal level to fulfill cellular energy requirements and preventing excess ROS production. Responsible for the E2-like covalent binding of phosphatidylethanolamine to the C-terminal Gly of apg-6/atg8. The atg12-apg-4/atg5 conjugate plays a role of an E3 and promotes the transfer of apg-6/atg8 from apg-3/atg3 to phosphatidylethanolamine (PE). This step is required for the membrane association of apg-6/atg8. The formation of the apg-6/atg8-phosphatidylethanolamine conjugate is essential for autophagy and for the cytoplasm to vacuole transport (Cvt). The apg-6/atg8-PE conjugate mediates tethering between adjacent membranes and stimulates membrane hemifusion, leading to expansion of the autophagosomal membrane during autophagy. The chain is Autophagy-related protein 3 (apg-3) from Neurospora crassa (strain ATCC 24698 / 74-OR23-1A / CBS 708.71 / DSM 1257 / FGSC 987).